A 121-amino-acid chain; its full sequence is Large ribosomal subunit protein bL12 (121 aa).

This sequence belongs to the bacterial ribosomal protein bL12 family. Homodimer. Part of the ribosomal stalk of the 50S ribosomal subunit. Forms a multimeric L10(L12)X complex, where L10 forms an elongated spine to which 2 to 4 L12 dimers bind in a sequential fashion. Binds GTP-bound translation factors.

Its function is as follows. Forms part of the ribosomal stalk which helps the ribosome interact with GTP-bound translation factors. Is thus essential for accurate translation. This is Large ribosomal subunit protein bL12 from Pseudomonas fluorescens (strain SBW25).